Here is a 72-residue protein sequence, read N- to C-terminus: Translation initiation factor IF-1 (72 aa).

The S1-like domain maps to 1–72 (MSKEDMIEFS…SKGRITFRFK (72 aa)).

It belongs to the IF-1 family. As to quaternary structure, component of the 30S ribosomal translation pre-initiation complex which assembles on the 30S ribosome in the order IF-2 and IF-3, IF-1 and N-formylmethionyl-tRNA(fMet); mRNA recruitment can occur at any time during PIC assembly.

It is found in the cytoplasm. In terms of biological role, one of the essential components for the initiation of protein synthesis. Stabilizes the binding of IF-2 and IF-3 on the 30S subunit to which N-formylmethionyl-tRNA(fMet) subsequently binds. Helps modulate mRNA selection, yielding the 30S pre-initiation complex (PIC). Upon addition of the 50S ribosomal subunit IF-1, IF-2 and IF-3 are released leaving the mature 70S translation initiation complex. This chain is Translation initiation factor IF-1, found in Gluconacetobacter diazotrophicus (strain ATCC 49037 / DSM 5601 / CCUG 37298 / CIP 103539 / LMG 7603 / PAl5).